A 579-amino-acid polypeptide reads, in one-letter code: Glucans biosynthesis protein G (579 aa).

Positions 1–37 (MIVSPHKASRIPGNRLRKALMASAALVGLMSAGQLWA) are cleaved as a signal peptide. Residues 516-579 (AKPAEEAKHD…TWSYQLPADE (64 aa)) form a disordered region. Over residues 517-539 (KPAEEAKHDKTAAKHGKAEKAAK) the composition is skewed to basic and acidic residues.

Belongs to the OpgD/OpgG family.

It is found in the periplasm. It participates in glycan metabolism; osmoregulated periplasmic glucan (OPG) biosynthesis. In terms of biological role, involved in the biosynthesis of osmoregulated periplasmic glucans (OPGs). This Pseudomonas putida (strain W619) protein is Glucans biosynthesis protein G.